Consider the following 396-residue polypeptide: Phosphoglycerate kinase (396 aa).

Substrate is bound by residues 21–23, arginine 36, 59–62, arginine 118, and arginine 151; these read DIN and HFGR. Residues lysine 201, glutamate 323, and 353-356 contribute to the ATP site; that span reads GGDT.

The protein belongs to the phosphoglycerate kinase family. In terms of assembly, monomer.

Its subcellular location is the cytoplasm. It carries out the reaction (2R)-3-phosphoglycerate + ATP = (2R)-3-phospho-glyceroyl phosphate + ADP. It functions in the pathway carbohydrate degradation; glycolysis; pyruvate from D-glyceraldehyde 3-phosphate: step 2/5. This Ruegeria sp. (strain TM1040) (Silicibacter sp.) protein is Phosphoglycerate kinase.